A 533-amino-acid chain; its full sequence is GPI mannosyltransferase 4 (533 aa).

6 helical membrane passes run 8 to 28, 61 to 81, 91 to 111, 144 to 164, 175 to 195, and 216 to 236; these read AIIYTFLLILRFWFSQGSSYI, IRSVVPLNVMLLPIFLLCRCI, ILLFTRLYMCLISLLIDLSIW, IETIFFFLTILFLSKLNSVPL, LLAIVSVLGFFTRITFLAFVI, and IFLHLCIFVSVSFATVLACIL. N-linked (GlcNAc...) asparagine glycosylation is present at N261. 4 consecutive transmembrane segments (helical) span residues 274-294, 297-317, 319-335, and 338-358; these read FFTNMPLLCGPLIFVPKLWDV, PATWLWLLPVFILSLFPHQEP, FLLPAASIFIVNSGCLV, and YWIKFLFVMYAVVLAVFFGIM. 6 N-linked (GlcNAc...) asparagine glycosylation sites follow: N378, N419, N425, N452, N477, and N518.

It belongs to the glycosyltransferase 22 family. PIGZ subfamily.

It is found in the endoplasmic reticulum membrane. The protein operates within glycolipid biosynthesis; glycosylphosphatidylinositol-anchor biosynthesis. Alpha-1,2-mannosyltransferase involved in glycosylphosphatidylinositol-anchor biosynthesis. Transfers a fourth mannose to trimannosyl-GPIs during GPI precursor assembly. The presence of a fourth mannose in GPI is essential in fungi. The chain is GPI mannosyltransferase 4 (smp3) from Schizosaccharomyces pombe (strain 972 / ATCC 24843) (Fission yeast).